A 182-amino-acid chain; its full sequence is NAD(P)H-quinone oxidoreductase subunit J (182 aa).

This sequence belongs to the complex I 30 kDa subunit family. In terms of assembly, NDH-1 can be composed of about 15 different subunits; different subcomplexes with different compositions have been identified which probably have different functions.

The protein resides in the cellular thylakoid membrane. The enzyme catalyses a plastoquinone + NADH + (n+1) H(+)(in) = a plastoquinol + NAD(+) + n H(+)(out). It catalyses the reaction a plastoquinone + NADPH + (n+1) H(+)(in) = a plastoquinol + NADP(+) + n H(+)(out). In terms of biological role, NDH-1 shuttles electrons from an unknown electron donor, via FMN and iron-sulfur (Fe-S) centers, to quinones in the respiratory and/or the photosynthetic chain. The immediate electron acceptor for the enzyme in this species is believed to be plastoquinone. Couples the redox reaction to proton translocation, and thus conserves the redox energy in a proton gradient. Cyanobacterial NDH-1 also plays a role in inorganic carbon-concentration. The protein is NAD(P)H-quinone oxidoreductase subunit J of Synechococcus sp. (strain WH7803).